The following is a 64-amino-acid chain: Large ribosomal subunit protein bL33c (64 aa).

Belongs to the bacterial ribosomal protein bL33 family.

The protein localises to the plastid. Its subcellular location is the cyanelle. This Cyanophora paradoxa protein is Large ribosomal subunit protein bL33c (rpl33).